We begin with the raw amino-acid sequence, 76 residues long: Kappa-actitoxin-Avd4n (76 aa).

The signal sequence occupies residues 1–19; that stretch reads MNKAFFLCLVVLCAAVVFA. Positions 20-31 are excised as a propeptide; sequence AEDLQKGKHAPF. 2 cysteine pairs are disulfide-bonded: Cys-37–Cys-72 and Cys-39–Cys-65.

Belongs to the sea anemone type 3 (BDS) potassium channel toxin family. Post-translationally, lacks the conventional Cys residue at position 55. Thus, only 2 disulfide are possible present. Experimental results show no expression in the ectodermal tissue from the distal and proximal tentacles, body wall, and oral disk. Since paralogs are expressed in this tissue, an expression of this toxin in this tissue is probable. The negative results could be explained by the very low abundance of EST sequences.

Its subcellular location is the secreted. It localises to the nematocyst. Its function is as follows. Blocks Kv3 voltage-gated potassium channels. Reduces blood pressure. This chain is Kappa-actitoxin-Avd4n, found in Anemonia viridis (Snakelocks anemone).